The following is a 356-amino-acid chain: sn-glycerol-3-phosphate import ATP-binding protein UgpC (356 aa).

The ABC transporter domain maps to 4–235 (LKLQAVTKSW…PASLFVASFI (232 aa)). 37-44 (GPSGCGKS) contributes to the ATP binding site.

Belongs to the ABC transporter superfamily. sn-glycerol-3-phosphate importer (TC 3.A.1.1.3) family. In terms of assembly, the complex is composed of two ATP-binding proteins (UgpC), two transmembrane proteins (UgpA and UgpE) and a solute-binding protein (UgpB).

The protein localises to the cell inner membrane. The catalysed reaction is sn-glycerol 3-phosphate(out) + ATP + H2O = sn-glycerol 3-phosphate(in) + ADP + phosphate + H(+). Its function is as follows. Part of the ABC transporter complex UgpBAEC involved in sn-glycerol-3-phosphate (G3P) import. Responsible for energy coupling to the transport system. The sequence is that of sn-glycerol-3-phosphate import ATP-binding protein UgpC from Escherichia coli O6:H1 (strain CFT073 / ATCC 700928 / UPEC).